The chain runs to 393 residues: ATP phosphoribosyltransferase regulatory subunit (393 aa).

This sequence belongs to the class-II aminoacyl-tRNA synthetase family. HisZ subfamily. In terms of assembly, heteromultimer composed of HisG and HisZ subunits.

Its subcellular location is the cytoplasm. It functions in the pathway amino-acid biosynthesis; L-histidine biosynthesis; L-histidine from 5-phospho-alpha-D-ribose 1-diphosphate: step 1/9. Its function is as follows. Required for the first step of histidine biosynthesis. May allow the feedback regulation of ATP phosphoribosyltransferase activity by histidine. The protein is ATP phosphoribosyltransferase regulatory subunit of Synechococcus sp. (strain RCC307).